A 461-amino-acid polypeptide reads, in one-letter code: Dihydrolipoyl dehydrogenase (461 aa).

FAD is bound by residues 33 to 41, lysine 50, and alanine 112; that span reads EAAEVGGVC. Cysteine 41 and cysteine 46 are oxidised to a cystine. NAD(+) contacts are provided by residues 173–177, glutamate 196, and 263–266; these read GGGAV and AVGR. Positions 306 and 314 each coordinate FAD. Residue histidine 437 is the Proton acceptor of the active site.

The protein belongs to the class-I pyridine nucleotide-disulfide oxidoreductase family. Homodimer. It depends on FAD as a cofactor.

The protein resides in the membrane. It catalyses the reaction N(6)-[(R)-dihydrolipoyl]-L-lysyl-[protein] + NAD(+) = N(6)-[(R)-lipoyl]-L-lysyl-[protein] + NADH + H(+). In terms of biological role, has chromate reductase activity. This Thermus scotoductus (strain ATCC 700910 / SA-01) protein is Dihydrolipoyl dehydrogenase.